A 572-amino-acid polypeptide reads, in one-letter code: Asparagine--tRNA ligase, cytoplasmic 1 (572 aa).

Alanine 2 bears the N-acetylalanine mark. Positions 53-131 (VRIGGWVKSG…QQIELNVVKV (79 aa)) form a DNA-binding region, OB. Positions 236-292 (DVEAARLIVIERGNVVAELKAAKASKEAITAAVAELKIAKETFAHIDERSRLRPGLP) constitute a WHEP-TRS domain.

This sequence belongs to the class-II aminoacyl-tRNA synthetase family.

It is found in the cytoplasm. It localises to the cytosol. The catalysed reaction is tRNA(Asn) + L-asparagine + ATP = L-asparaginyl-tRNA(Asn) + AMP + diphosphate + H(+). This Arabidopsis thaliana (Mouse-ear cress) protein is Asparagine--tRNA ligase, cytoplasmic 1.